Here is an 82-residue protein sequence, read N- to C-terminus: ATP synthase subunit c, chloroplastic (82 aa).

2 helical membrane-spanning segments follow: residues 4 to 24 (IISAASVIAAGLAIGLAAIGP) and 57 to 77 (LAFMEALTIYGLVVALALLFA).

It belongs to the ATPase C chain family. In terms of assembly, F-type ATPases have 2 components, F(1) - the catalytic core - and F(0) - the membrane proton channel. F(1) has five subunits: alpha(3), beta(3), gamma(1), delta(1), epsilon(1). F(0) has four main subunits: a(1), b(1), b'(1) and c(10-14). The alpha and beta chains form an alternating ring which encloses part of the gamma chain. F(1) is attached to F(0) by a central stalk formed by the gamma and epsilon chains, while a peripheral stalk is formed by the delta, b and b' chains.

The protein resides in the plastid. It is found in the chloroplast thylakoid membrane. Its function is as follows. F(1)F(0) ATP synthase produces ATP from ADP in the presence of a proton or sodium gradient. F-type ATPases consist of two structural domains, F(1) containing the extramembraneous catalytic core and F(0) containing the membrane proton channel, linked together by a central stalk and a peripheral stalk. During catalysis, ATP synthesis in the catalytic domain of F(1) is coupled via a rotary mechanism of the central stalk subunits to proton translocation. In terms of biological role, key component of the F(0) channel; it plays a direct role in translocation across the membrane. A homomeric c-ring of between 10-14 subunits forms the central stalk rotor element with the F(1) delta and epsilon subunits. The polypeptide is ATP synthase subunit c, chloroplastic (Thalassiosira pseudonana (Marine diatom)).